Consider the following 288-residue polypeptide: Phenazine biosynthesis-like domain-containing protein (288 aa).

The active site involves Glu46.

It belongs to the PhzF family. Interacts with UNRIP/MAWD.

This is Phenazine biosynthesis-like domain-containing protein (PBLD) from Bos taurus (Bovine).